The primary structure comprises 375 residues: Alcohol dehydrogenase 1 (375 aa).

Ser2 carries the N-acetylserine modification. Residues Cys47, His68, Cys98, Cys101, Cys104, Cys112, and Cys175 each contribute to the Zn(2+) site. NAD(+)-binding positions include 200-205 (GLGGVG), Asp224, and Lys229. Residue Lys234 is modified to N6-succinyllysine. 293–295 (VGV) is an NAD(+) binding site. An N6-succinyllysine modification is found at Lys340. Arg370 is an NAD(+) binding site.

Belongs to the zinc-containing alcohol dehydrogenase family. In terms of assembly, homodimer. The cofactor is Zn(2+).

The protein resides in the cytoplasm. The catalysed reaction is a primary alcohol + NAD(+) = an aldehyde + NADH + H(+). The enzyme catalyses a secondary alcohol + NAD(+) = a ketone + NADH + H(+). The polypeptide is Alcohol dehydrogenase 1 (ADH1) (Oryctolagus cuniculus (Rabbit)).